A 565-amino-acid polypeptide reads, in one-letter code: Periplasmic trehalase (565 aa).

The signal sequence occupies residues 1–30 (MKSPTPSRPQKMALIPACIFLCFAALSVQA). Substrate-binding positions include R152, 159 to 160 (WD), N196, 205 to 207 (RSQ), 277 to 279 (RPE), and G310. Residues D312 and E496 each act as proton donor/acceptor in the active site. Residue E511 participates in substrate binding. Positions 539 to 565 (CDNVPATRPLSESTTQPLKQKEAEPTP) are disordered.

The protein belongs to the glycosyl hydrolase 37 family. Monomer.

Its subcellular location is the periplasm. The catalysed reaction is alpha,alpha-trehalose + H2O = alpha-D-glucose + beta-D-glucose. Its function is as follows. Provides the cells with the ability to utilize trehalose at high osmolarity by splitting it into glucose molecules that can subsequently be taken up by the phosphotransferase-mediated uptake system. The polypeptide is Periplasmic trehalase (Escherichia coli O7:K1 (strain IAI39 / ExPEC)).